Here is a 126-residue protein sequence, read N- to C-terminus: Large ribosomal subunit protein uL22c (126 aa).

It belongs to the universal ribosomal protein uL22 family. In terms of assembly, part of the 50S ribosomal subunit.

It is found in the plastid. Its subcellular location is the chloroplast. Its function is as follows. This protein binds specifically to 23S rRNA. Functionally, the globular domain of the protein is located near the polypeptide exit tunnel on the outside of the subunit, while an extended beta-hairpin is found that lines the wall of the exit tunnel in the center of the 70S ribosome. The sequence is that of Large ribosomal subunit protein uL22c (rpl22) from Cryptomeria japonica (Japanese cedar).